Reading from the N-terminus, the 88-residue chain is Small ribosomal subunit protein bS20 (88 aa).

This sequence belongs to the bacterial ribosomal protein bS20 family.

Functionally, binds directly to 16S ribosomal RNA. This chain is Small ribosomal subunit protein bS20, found in Methylocella silvestris (strain DSM 15510 / CIP 108128 / LMG 27833 / NCIMB 13906 / BL2).